Reading from the N-terminus, the 349-residue chain is Ribosomal RNA large subunit methyltransferase Cfr (349 aa).

Residue Glu-89 is the Proton acceptor of the active site. In terms of domain architecture, Radical SAM core spans Lys-96–Asp-331. A disulfide bond links Cys-103 and Cys-336. [4Fe-4S] cluster is bound by residues Cys-110, Cys-114, and Cys-117. S-adenosyl-L-methionine is bound by residues Gly-156–Glu-157, Ser-187, Ser-210–His-212, and Asn-291. Cys-336 acts as the S-methylcysteine intermediate in catalysis.

Belongs to the radical SAM superfamily. RlmN family. Cfr subfamily. [4Fe-4S] cluster is required as a cofactor.

Its subcellular location is the cytoplasm. The enzyme catalyses adenosine(2503) in 23S rRNA + 2 reduced [2Fe-2S]-[ferredoxin] + 2 S-adenosyl-L-methionine = 8-methyladenosine(2503) in 23S rRNA + 5'-deoxyadenosine + L-methionine + 2 oxidized [2Fe-2S]-[ferredoxin] + S-adenosyl-L-homocysteine. Functionally, specifically methylates position 8 of adenine 2503 in 23S rRNA. Confers resistance to some classes of antibiotics. This is Ribosomal RNA large subunit methyltransferase Cfr from Bacillus velezensis (strain DSM 23117 / BGSC 10A6 / LMG 26770 / FZB42) (Bacillus amyloliquefaciens subsp. plantarum).